We begin with the raw amino-acid sequence, 305 residues long: GS homeobox 2 (305 aa).

Disordered stretches follow at residues 115-151 (DAQF…AAAA) and 259-305 (KKEG…ISPL). Residues 123–140 (SHAHHHHHPPQHHHHHHQ) are compositionally biased toward basic residues. Residues 141 to 151 (PQQPGSAAAAA) show a composition bias toward low complexity. Positions 203–262 (GKRMRTAFTSTQLLELEREFSSNMYLSRLRRIEIATYLNLSEKQVKIWFQNRRVKHKKEG) form a DNA-binding region, homeobox.

This sequence belongs to the Antp homeobox family.

It localises to the nucleus. Functionally, transcription factor that binds 5'-CNAATTAG-3' DNA sequence and regulates the expression of numerous genes including genes important for brain development. During telencephalic development, causes ventralization of pallial progenitors and, depending on the developmental stage, specifies different neuronal fates. At early stages, necessary and sufficient to correctly specify the ventral lateral ganglionic eminence (LGE) and its major derivatives, the striatal projection neurons. At later stages, may specify LGE progenitors toward dorsal LGE fates, including olfactory bulb interneurons. This is GS homeobox 2 (Gsx2) from Mus musculus (Mouse).